The sequence spans 364 residues: Homeobox protein KNOX3 (364 aa).

Positions 13 to 49 (TAHGQHHSQLPWGSSPLSAVISPPPQQQQQHQQQSAG) are disordered. Residues 19–29 (HSQLPWGSSPL) show a composition bias toward polar residues. In terms of domain architecture, ELK spans 246-266 (ELKHHLLKKYSGYLSSLKQEL). The homeobox; TALE-type DNA-binding region spans 267–330 (SKKKKKGKLP…NQRKRHWKPT (64 aa)).

The protein belongs to the TALE/KNOX homeobox family. Binds DNA as a monomer. In terms of tissue distribution, the unit of inflorescence is the spikelet, which bears a fertile tract, the lemma, and the floret consisting of palea, two lodicules, three stamens and the pistil. The lemma is completed by the awn, an appendage homologous to the laminae of normal leaves. Expressed in the inflorescences and lemmas and at lower levels, in palea and vascular bundles.

It localises to the nucleus. Its function is as follows. May play a role in meristem formation and/or maintenance. Overexpression causes the hooded phenotype characterized by the appearance of an extra flower of inverse polarity on the lemma. Binds to the DNA sequence 5'-TGAC-3'. The polypeptide is Homeobox protein KNOX3 (KNOX3) (Hordeum vulgare (Barley)).